The primary structure comprises 210 residues: MDLYAIVPVKELRHAKQRLAHALDAHERQELSLAMLGDVLAALSQSQVRRVTVISRDTAAYQIATAYGAVIAVDQTSDLNAALYQAAVDVPDDAAILIVPSDVPLLRADDVMMLAAQPGVAITPAHDGGTNLLLTPAIRGWTFLFGPDSFVRHCAEARRRGWTVHVVRLPHLERDIDEVDDLVWLAQQPGHTAAQRLAREFLMRKGARIW.

Thr130, Gly146, and Ser149 together coordinate phosphoenolpyruvate.

It belongs to the CofC family.

It carries out the reaction phosphoenolpyruvate + GTP + H(+) = enolpyruvoyl-2-diphospho-5'-guanosine + diphosphate. It participates in cofactor biosynthesis; coenzyme F420 biosynthesis. Guanylyltransferase that catalyzes the activation of phosphoenolpyruvate (PEP) as enolpyruvoyl-2-diphospho-5'-guanosine, via the condensation of PEP with GTP. It is involved in the biosynthesis of coenzyme F420, a hydride carrier cofactor. The chain is Phosphoenolpyruvate guanylyltransferase from Roseiflexus castenholzii (strain DSM 13941 / HLO8).